The primary structure comprises 90 residues: Mitochondrial import inner membrane translocase subunit Tim10-B (90 aa).

Positions 29-54 match the Twin CX3C motif motif; the sequence is CHKKCVPPHYKEAELSKGESVCLDRC. 2 disulfides stabilise this stretch: Cys29/Cys54 and Cys33/Cys50.

Belongs to the small Tim family. As to quaternary structure, heterohexamer; composed of 3 copies of TIMM9 and 3 copies of TIMM10/TIM10A, named soluble 70 kDa complex. The complex forms a 6-bladed alpha-propeller structure and associates with the TIMM22 component of the TIM22 complex. Interacts with multi-pass transmembrane proteins in transit.

It localises to the mitochondrion inner membrane. Mitochondrial intermembrane chaperone that participates in the import and insertion of multi-pass transmembrane proteins into the mitochondrial inner membrane. May also be required for the transfer of beta-barrel precursors from the TOM complex to the sorting and assembly machinery (SAM complex) of the outer membrane. Acts as a chaperone-like protein that protects the hydrophobic precursors from aggregation and guide them through the mitochondrial intermembrane space. In Xenopus laevis (African clawed frog), this protein is Mitochondrial import inner membrane translocase subunit Tim10-B (timm10-b).